An 89-amino-acid chain; its full sequence is Cell division topological specificity factor (89 aa).

The protein belongs to the MinE family.

Prevents the cell division inhibition by proteins MinC and MinD at internal division sites while permitting inhibition at polar sites. This ensures cell division at the proper site by restricting the formation of a division septum at the midpoint of the long axis of the cell. The protein is Cell division topological specificity factor of Klebsiella pneumoniae (strain 342).